Consider the following 156-residue polypeptide: Large ribosomal subunit protein uL15 (156 aa).

The disordered stretch occupies residues 29-48 (CGKGKTSGRGHKGQKARSGV). Residues 34–43 (TSGRGHKGQK) show a composition bias toward basic residues.

This sequence belongs to the universal ribosomal protein uL15 family. In terms of assembly, part of the 50S ribosomal subunit.

Functionally, binds to the 23S rRNA. The sequence is that of Large ribosomal subunit protein uL15 from Ehrlichia chaffeensis (strain ATCC CRL-10679 / Arkansas).